Reading from the N-terminus, the 439-residue chain is Maintenance of mitochondrial morphology protein 1 (439 aa).

The Lumenal portion of the chain corresponds to 1–76 (MSQDLIETTA…NGNTWSFTQG (76 aa)). The chain crosses the membrane as a helical span at residues 77 to 97 (LVIGQVSVIFIIIVFVKFFVF). Residues 98–439 (ADSSSHIPTK…TPGEYVNSNI (342 aa)) lie on the Cytoplasmic side of the membrane. 3 disordered regions span residues 125–145 (KHSN…SLDS), 309–336 (MNGY…DGGT), and 405–425 (REPV…GTSA). Positions 165–395 (ASESLDWFNV…EPRFQVVRLP (231 aa)) constitute an SMP-LTD domain. Low complexity-rich tracts occupy residues 315–326 (ENANGDGASSSN) and 410–424 (KKTT…NGTS).

Belongs to the MMM1 family. In terms of assembly, homodimer. Component of the ER-mitochondria encounter structure (ERMES) or MDM complex, composed of MMM1, MDM10, MDM12 and MDM34. An MMM1 homodimer associates with one molecule of MDM12 on each side in a pairwise head-to-tail manner, and the SMP-LTD domains of MMM1 and MDM12 generate a continuous hydrophobic tunnel for phospholipid trafficking.

Its subcellular location is the endoplasmic reticulum membrane. Its function is as follows. Component of the ERMES/MDM complex, which serves as a molecular tether to connect the endoplasmic reticulum (ER) and mitochondria. Components of this complex are involved in the control of mitochondrial shape and protein biogenesis, and function in nonvesicular lipid trafficking between the ER and mitochondria. The MDM12-MMM1 subcomplex functions in the major beta-barrel assembly pathway that is responsible for biogenesis of all outer membrane beta-barrel proteins, and acts in a late step after the SAM complex. The MDM10-MDM12-MMM1 subcomplex further acts in the TOM40-specific pathway after the action of the MDM12-MMM1 complex. Essential for establishing and maintaining the structure of mitochondria and maintenance of mtDNA nucleoids. The polypeptide is Maintenance of mitochondrial morphology protein 1 (Candida albicans (strain SC5314 / ATCC MYA-2876) (Yeast)).